The primary structure comprises 396 residues: 1-deoxy-D-xylulose 5-phosphate reductoisomerase (396 aa).

Positions 17, 18, 19, 20, 47, and 130 each coordinate NADPH. 1-deoxy-D-xylulose 5-phosphate is bound at residue lysine 131. Glutamate 132 provides a ligand contact to NADPH. Aspartate 156 contacts Mn(2+). Positions 157, 158, 182, and 205 each coordinate 1-deoxy-D-xylulose 5-phosphate. Glutamate 158 is a binding site for Mn(2+). Glycine 211 provides a ligand contact to NADPH. 1-deoxy-D-xylulose 5-phosphate-binding residues include serine 218, asparagine 223, lysine 224, and glutamate 227. Glutamate 227 is a binding site for Mn(2+).

The protein belongs to the DXR family. Mg(2+) is required as a cofactor. The cofactor is Mn(2+).

The enzyme catalyses 2-C-methyl-D-erythritol 4-phosphate + NADP(+) = 1-deoxy-D-xylulose 5-phosphate + NADPH + H(+). It functions in the pathway isoprenoid biosynthesis; isopentenyl diphosphate biosynthesis via DXP pathway; isopentenyl diphosphate from 1-deoxy-D-xylulose 5-phosphate: step 1/6. In terms of biological role, catalyzes the NADPH-dependent rearrangement and reduction of 1-deoxy-D-xylulose-5-phosphate (DXP) to 2-C-methyl-D-erythritol 4-phosphate (MEP). The protein is 1-deoxy-D-xylulose 5-phosphate reductoisomerase of Rhizobium etli (strain ATCC 51251 / DSM 11541 / JCM 21823 / NBRC 15573 / CFN 42).